Consider the following 316-residue polypeptide: Ribosomal protein L11 methyltransferase (316 aa).

Residues T157, G178, D200, and N243 each coordinate S-adenosyl-L-methionine.

Belongs to the methyltransferase superfamily. PrmA family.

It is found in the cytoplasm. The enzyme catalyses L-lysyl-[protein] + 3 S-adenosyl-L-methionine = N(6),N(6),N(6)-trimethyl-L-lysyl-[protein] + 3 S-adenosyl-L-homocysteine + 3 H(+). Its function is as follows. Methylates ribosomal protein L11. This Streptococcus pneumoniae (strain JJA) protein is Ribosomal protein L11 methyltransferase.